The primary structure comprises 122 residues: Hydrogenase maturation factor HypA (122 aa).

His2 is a Ni(2+) binding site. Zn(2+) is bound by residues Cys73, Cys75, Cys95, and Cys98.

It belongs to the HypA/HybF family.

Functionally, involved in the maturation of [NiFe] hydrogenases. Required for nickel insertion into the metal center of the hydrogenase. The protein is Hydrogenase maturation factor HypA of Methanothermobacter thermautotrophicus (strain ATCC 29096 / DSM 1053 / JCM 10044 / NBRC 100330 / Delta H) (Methanobacterium thermoautotrophicum).